A 249-amino-acid chain; its full sequence is Adenosylcobinamide-GDP ribazoletransferase (249 aa).

7 helical membrane-spanning segments follow: residues 29-49 (LYWF…CAWL), 50-70 (PLSI…GFIV), 104-124 (VGSF…VAIL), 131-151 (AFAL…LLAA), 165-185 (GFVG…SLMM), 194-214 (PFLL…IGFL), and 226-246 (VLGA…GVAF).

The protein belongs to the CobS family. Mg(2+) is required as a cofactor.

It is found in the cell inner membrane. It catalyses the reaction alpha-ribazole + adenosylcob(III)inamide-GDP = adenosylcob(III)alamin + GMP + H(+). It carries out the reaction alpha-ribazole 5'-phosphate + adenosylcob(III)inamide-GDP = adenosylcob(III)alamin 5'-phosphate + GMP + H(+). Its pathway is cofactor biosynthesis; adenosylcobalamin biosynthesis; adenosylcobalamin from cob(II)yrinate a,c-diamide: step 7/7. Joins adenosylcobinamide-GDP and alpha-ribazole to generate adenosylcobalamin (Ado-cobalamin). Also synthesizes adenosylcobalamin 5'-phosphate from adenosylcobinamide-GDP and alpha-ribazole 5'-phosphate. In Chlorobium phaeovibrioides (strain DSM 265 / 1930) (Prosthecochloris vibrioformis (strain DSM 265)), this protein is Adenosylcobinamide-GDP ribazoletransferase.